Here is a 63-residue protein sequence, read N- to C-terminus: Cecropin-B (63 aa).

A signal peptide spans 1–22 (MNFNKIFVFVALILAISLGNTE). Arg62 is subject to Arginine amide.

This sequence belongs to the cecropin family.

It localises to the secreted. Its function is as follows. Cecropins have lytic and antibacterial activity against several Gram-positive and Gram-negative bacteria. This is Cecropin-B (CecB) from Drosophila simulans (Fruit fly).